A 282-amino-acid polypeptide reads, in one-letter code: NADPH-dependent 7-cyano-7-deazaguanine reductase (282 aa).

88 to 90 (IES) is a binding site for substrate. 90–91 (SK) contacts NADPH. C190 serves as the catalytic Thioimide intermediate. D197 acts as the Proton donor in catalysis. 229 to 230 (HE) is a binding site for substrate. 258–259 (RG) is a binding site for NADPH.

It belongs to the GTP cyclohydrolase I family. QueF type 2 subfamily. In terms of assembly, homodimer.

The protein localises to the cytoplasm. It catalyses the reaction 7-aminomethyl-7-carbaguanine + 2 NADP(+) = 7-cyano-7-deazaguanine + 2 NADPH + 3 H(+). It participates in tRNA modification; tRNA-queuosine biosynthesis. In terms of biological role, catalyzes the NADPH-dependent reduction of 7-cyano-7-deazaguanine (preQ0) to 7-aminomethyl-7-deazaguanine (preQ1). The protein is NADPH-dependent 7-cyano-7-deazaguanine reductase of Escherichia coli (strain UTI89 / UPEC).